A 305-amino-acid chain; its full sequence is Protein FdhE homolog (305 aa).

Belongs to the FdhE family.

The protein localises to the cytoplasm. Functionally, necessary for formate dehydrogenase activity. The protein is Protein FdhE homolog of Actinobacillus pleuropneumoniae serotype 7 (strain AP76).